A 322-amino-acid chain; its full sequence is Formimidoylglutamase (322 aa).

Mn(2+) contacts are provided by His-130, Asp-156, His-158, Asp-160, Cys-244, and Asp-246.

The protein belongs to the arginase family. Mn(2+) is required as a cofactor.

It catalyses the reaction N-formimidoyl-L-glutamate + H2O = formamide + L-glutamate. It participates in amino-acid degradation; L-histidine degradation into L-glutamate; L-glutamate from N-formimidoyl-L-glutamate (hydrolase route): step 1/1. Functionally, catalyzes the conversion of N-formimidoyl-L-glutamate to L-glutamate and formamide. The chain is Formimidoylglutamase from Geobacillus thermodenitrificans (strain NG80-2).